Consider the following 374-residue polypeptide: Putative serine/threonine-protein kinase ZK507.3 (374 aa).

The Protein kinase domain occupies 25–296; that stretch reads WKVIVELGKG…CKLTLKEPLV (272 aa). ATP contacts are provided by residues 31–39 and Lys-60; that span reads LGKGGYGTV. The active-site Proton acceptor is Asp-158. Residues 302 to 374 are disordered; sequence NDNESGSTPT…KTRNKKPSRK (73 aa). Over residues 306 to 324 the composition is skewed to low complexity; sequence SGSTPTTSATACSPSSSTG. The span at 334-343 shows a compositional bias: polar residues; it reads IASNIDQKSI. The segment covering 364 to 374 has biased composition (basic residues); the sequence is TKTRNKKPSRK.

It belongs to the protein kinase superfamily. Ser/Thr protein kinase family.

It catalyses the reaction L-seryl-[protein] + ATP = O-phospho-L-seryl-[protein] + ADP + H(+). The enzyme catalyses L-threonyl-[protein] + ATP = O-phospho-L-threonyl-[protein] + ADP + H(+). In Caenorhabditis elegans, this protein is Putative serine/threonine-protein kinase ZK507.3.